We begin with the raw amino-acid sequence, 285 residues long: Neuralized-like protein 2 (285 aa).

The disordered stretch occupies residues 1 to 20; that stretch reads MAAASEPVDSGALWGLERPE. The NHR domain maps to 23 to 244; that stretch reads PTRFHRVHGA…STKSVRLVQL (222 aa). The SOCS box domain maps to 250–285; that stretch reads SLQTLCRLVIQRSMVHRLAIDGLHLPKELKDFCKYE.

Probable component the ECS(NEURL2) E3 ubiquitin-protein ligase complex consisting of ELOB/Elongin B, ELOC/Elongin C, CUL5, RBX1 and NEURL2. Interacts with CTNNB1. Expressed specifically in skeletal and cardiac muscles.

It localises to the cytoplasm. It functions in the pathway protein modification; protein ubiquitination. Its function is as follows. Plays an important role in the process of myofiber differentiation and maturation. Probable substrate-recognition component of a SCF-like ECS (Elongin BC-CUL2/5-SOCS-box protein) E3 ubiquitin-protein ligase complex, which mediates the ubiquitination of proteins. Probably contributes to catalysis through recognition and positioning of the substrate and the ubiquitin-conjugating enzyme. During myogenesis, controls the ubiquitination and degradation of the specific pool of CTNNB1/beta-catenin located at the sarcolemma. The chain is Neuralized-like protein 2 (NEURL2) from Homo sapiens (Human).